Consider the following 657-residue polypeptide: tRNA 5-methylaminomethyl-2-thiouridine biosynthesis bifunctional protein MnmC (657 aa).

Residues 1–236 (MPDRLVPATL…KRAMLVGEYA (236 aa)) form a tRNA (mnm(5)s(2)U34)-methyltransferase region. The FAD-dependent cmnm(5)s(2)U34 oxidoreductase stretch occupies residues 261-657 (IGAGVAGCAV…LRARQVSAAD (397 aa)).

In the N-terminal section; belongs to the methyltransferase superfamily. tRNA (mnm(5)s(2)U34)-methyltransferase family. It in the C-terminal section; belongs to the DAO family. Requires FAD as cofactor.

The protein resides in the cytoplasm. The catalysed reaction is 5-aminomethyl-2-thiouridine(34) in tRNA + S-adenosyl-L-methionine = 5-methylaminomethyl-2-thiouridine(34) in tRNA + S-adenosyl-L-homocysteine + H(+). In terms of biological role, catalyzes the last two steps in the biosynthesis of 5-methylaminomethyl-2-thiouridine (mnm(5)s(2)U) at the wobble position (U34) in tRNA. Catalyzes the FAD-dependent demodification of cmnm(5)s(2)U34 to nm(5)s(2)U34, followed by the transfer of a methyl group from S-adenosyl-L-methionine to nm(5)s(2)U34, to form mnm(5)s(2)U34. This Burkholderia multivorans (strain ATCC 17616 / 249) protein is tRNA 5-methylaminomethyl-2-thiouridine biosynthesis bifunctional protein MnmC.